The chain runs to 364 residues: 3-isopropylmalate dehydrogenase (364 aa).

79-92 (GSKWDHLPEIEKPE) is a binding site for NAD(+). Arginine 100, arginine 110, arginine 139, and aspartate 227 together coordinate substrate. Aspartate 227, aspartate 251, and aspartate 255 together coordinate Mg(2+). Residue 285–297 (GSAPNIAGKTIAN) participates in NAD(+) binding.

This sequence belongs to the isocitrate and isopropylmalate dehydrogenases family. LeuB type 1 subfamily. In terms of assembly, homodimer. It depends on Mg(2+) as a cofactor. Requires Mn(2+) as cofactor.

The protein localises to the cytoplasm. It catalyses the reaction (2R,3S)-3-isopropylmalate + NAD(+) = 4-methyl-2-oxopentanoate + CO2 + NADH. The protein operates within amino-acid biosynthesis; L-leucine biosynthesis; L-leucine from 3-methyl-2-oxobutanoate: step 3/4. In terms of biological role, catalyzes the oxidation of 3-carboxy-2-hydroxy-4-methylpentanoate (3-isopropylmalate) to 3-carboxy-4-methyl-2-oxopentanoate. The product decarboxylates to 4-methyl-2 oxopentanoate. The chain is 3-isopropylmalate dehydrogenase from Buchnera aphidicola subsp. Thelaxes suberi.